An 813-amino-acid chain; its full sequence is Cadherin-22 (813 aa).

The N-terminal stretch at 1 to 33 (MRPRPEGALRAGAALSPVLLFLLLLPLLGHLWA) is a signal peptide. The Extracellular portion of the chain corresponds to 34–621 (ASTPAPSSLS…AFVMAASLSP (588 aa)). 5 consecutive Cadherin domains span residues 61-165 (WVWN…EPRF), 166-274 (LHGP…PPRF), 275-391 (PQKM…PPEF), 392-495 (RPPS…NPPE), and 496-613 (LATP…TTAF). N159 carries N-linked (GlcNAc...) asparagine glycosylation. N-linked (GlcNAc...) asparagine glycans are attached at residues N463 and N609. The helical transmembrane segment at 622-642 (GALIALLVCVLILVVLALLIL) threads the bilayer. Residues 643 to 813 (TLRRHHKSHL…HRGDDEAPAS (171 aa)) lie on the Cytoplasmic side of the membrane. Residues 696–726 (GGDPGGGAASPPQAASSSERHSLPRGPSSPE) are disordered.

In terms of tissue distribution, predominantly expressed in brain. Abundant in olfactory bulb, cerebrum, and cerebellum, less in pons, medulla, and spinal cord. Low expression in heart. No expression in lung, liver, spleen, kidney, testis, stomach, intestine, colon, and placenta.

Its subcellular location is the cell membrane. Cadherins are calcium-dependent cell adhesion proteins. They preferentially interact with themselves in a homophilic manner in connecting cells; cadherins may thus contribute to the sorting of heterogeneous cell types. PB-cadherins may have a role in the morphological organization of pituitary gland and brain tissues. In Mus musculus (Mouse), this protein is Cadherin-22 (Cdh22).